The primary structure comprises 275 residues: 3-methyl-2-oxobutanoate hydroxymethyltransferase (275 aa).

2 residues coordinate Mg(2+): Asp49 and Asp88. 3-methyl-2-oxobutanoate contacts are provided by residues 49–50 (DS), Asp88, and Lys118. Glu120 provides a ligand contact to Mg(2+). Glu187 functions as the Proton acceptor in the catalytic mechanism.

It belongs to the PanB family. In terms of assembly, homodecamer; pentamer of dimers. Mg(2+) serves as cofactor.

Its subcellular location is the cytoplasm. The enzyme catalyses 3-methyl-2-oxobutanoate + (6R)-5,10-methylene-5,6,7,8-tetrahydrofolate + H2O = 2-dehydropantoate + (6S)-5,6,7,8-tetrahydrofolate. The protein operates within cofactor biosynthesis; (R)-pantothenate biosynthesis; (R)-pantoate from 3-methyl-2-oxobutanoate: step 1/2. Functionally, catalyzes the reversible reaction in which hydroxymethyl group from 5,10-methylenetetrahydrofolate is transferred onto alpha-ketoisovalerate to form ketopantoate. This Bartonella quintana (strain Toulouse) (Rochalimaea quintana) protein is 3-methyl-2-oxobutanoate hydroxymethyltransferase.